A 225-amino-acid chain; its full sequence is Uridylate kinase (225 aa).

7–11 contributes to the ATP binding site; that stretch reads KISGS. Glycine 44 provides a ligand contact to UMP. ATP-binding residues include glycine 45 and arginine 49. UMP contacts are provided by residues aspartate 66 and 114–120; that span reads FQPGQST. ATP is bound by residues tyrosine 147 and glutamate 150.

This sequence belongs to the UMP kinase family. As to quaternary structure, homohexamer.

It localises to the cytoplasm. It carries out the reaction UMP + ATP = UDP + ADP. It functions in the pathway pyrimidine metabolism; CTP biosynthesis via de novo pathway; UDP from UMP (UMPK route): step 1/1. With respect to regulation, inhibited by UTP. Catalyzes the reversible phosphorylation of UMP to UDP. The polypeptide is Uridylate kinase (Aeropyrum pernix (strain ATCC 700893 / DSM 11879 / JCM 9820 / NBRC 100138 / K1)).